The sequence spans 641 residues: Calpain-6 (641 aa).

Residues 26 to 343 (LFCDPTFLPE…FHKLNVCRNV (318 aa)) form the Calpain catalytic domain. A domain III region spans residues 344–495 (NNPVFGRKEL…IFSEVPVQLR (152 aa)). The region spanning 498-621 (TLDMPKMSCW…YLRKKGGPTA (124 aa)) is the C2 domain.

Belongs to the peptidase C2 family. Interacts (via domain III) with microtubules. Interacts (via domain II) with ARHGEF2 (via the N-terminal zinc finger).

The protein resides in the cytoplasm. The protein localises to the perinuclear region. It localises to the cytoskeleton. It is found in the spindle. Functionally, microtubule-stabilizing protein that may be involved in the regulation of microtubule dynamics and cytoskeletal organization. May act as a regulator of RAC1 activity through interaction with ARHGEF2 to control lamellipodial formation and cell mobility. Does not seem to have protease activity as it has lost the active site residues. This is Calpain-6 (Capn6) from Rattus norvegicus (Rat).